Here is a 289-residue protein sequence, read N- to C-terminus: Phosphatidylserine decarboxylase proenzyme (289 aa).

Active-site charge relay system; for autoendoproteolytic cleavage activity residues include Asp92, His149, and Ser254. The active-site Schiff-base intermediate with substrate; via pyruvic acid; for decarboxylase activity is Ser254. Ser254 is subject to Pyruvic acid (Ser); by autocatalysis.

Belongs to the phosphatidylserine decarboxylase family. PSD-B subfamily. Prokaryotic type I sub-subfamily. In terms of assembly, heterodimer of a large membrane-associated beta subunit and a small pyruvoyl-containing alpha subunit. Requires pyruvate as cofactor. Is synthesized initially as an inactive proenzyme. Formation of the active enzyme involves a self-maturation process in which the active site pyruvoyl group is generated from an internal serine residue via an autocatalytic post-translational modification. Two non-identical subunits are generated from the proenzyme in this reaction, and the pyruvate is formed at the N-terminus of the alpha chain, which is derived from the carboxyl end of the proenzyme. The autoendoproteolytic cleavage occurs by a canonical serine protease mechanism, in which the side chain hydroxyl group of the serine supplies its oxygen atom to form the C-terminus of the beta chain, while the remainder of the serine residue undergoes an oxidative deamination to produce ammonia and the pyruvoyl prosthetic group on the alpha chain. During this reaction, the Ser that is part of the protease active site of the proenzyme becomes the pyruvoyl prosthetic group, which constitutes an essential element of the active site of the mature decarboxylase.

The protein localises to the cell membrane. It catalyses the reaction a 1,2-diacyl-sn-glycero-3-phospho-L-serine + H(+) = a 1,2-diacyl-sn-glycero-3-phosphoethanolamine + CO2. The protein operates within phospholipid metabolism; phosphatidylethanolamine biosynthesis; phosphatidylethanolamine from CDP-diacylglycerol: step 2/2. Functionally, catalyzes the formation of phosphatidylethanolamine (PtdEtn) from phosphatidylserine (PtdSer). In Pseudomonas paraeruginosa (strain DSM 24068 / PA7) (Pseudomonas aeruginosa (strain PA7)), this protein is Phosphatidylserine decarboxylase proenzyme.